Here is a 169-residue protein sequence, read N- to C-terminus: MADCTTMRLASSVTIILLLLVASQALVVSGESSSSAMQSKTLNMNKLLNISEDHSPNGGRHWMQRMQPDSCSEQNVVVYQNNAEHLPSGIPTYSVEIINVCTACTVYDVHISCGEFASAELVDPSQFQRIGFNDCLVKGGGRLGPSEAVSFQYSNSFAYPLAVANVACE.

Residues 1–25 (MADCTTMRLASSVTIILLLLVASQA) form the signal peptide.

In terms of tissue distribution, expressed in roots, and at low levels in anthers during meiosis.

May play a role during anther development. The polypeptide is TPD1 protein homolog 1B (Oryza sativa subsp. japonica (Rice)).